A 418-amino-acid polypeptide reads, in one-letter code: Tyrosine--tRNA ligase (418 aa).

Residue tyrosine 34 coordinates L-tyrosine. Residues 39–48 carry the 'HIGH' region motif; the sequence is PTADSLHLGH. Residues tyrosine 169 and glutamine 173 each contribute to the L-tyrosine site. The short motif at 229 to 233 is the 'KMSKS' region element; sequence KFGKS. Residue lysine 232 coordinates ATP. An S4 RNA-binding domain is found at 352 to 418; it reads NNIVELLVSS…GKKKYFVLTY (67 aa).

The protein belongs to the class-I aminoacyl-tRNA synthetase family. TyrS type 1 subfamily. Homodimer.

It localises to the cytoplasm. The enzyme catalyses tRNA(Tyr) + L-tyrosine + ATP = L-tyrosyl-tRNA(Tyr) + AMP + diphosphate + H(+). Catalyzes the attachment of tyrosine to tRNA(Tyr) in a two-step reaction: tyrosine is first activated by ATP to form Tyr-AMP and then transferred to the acceptor end of tRNA(Tyr). In Streptococcus pneumoniae (strain 70585), this protein is Tyrosine--tRNA ligase.